Reading from the N-terminus, the 158-residue chain is 2-C-methyl-D-erythritol 2,4-cyclodiphosphate synthase (158 aa).

Residues Asp9 and His11 each coordinate a divalent metal cation. 4-CDP-2-C-methyl-D-erythritol 2-phosphate is bound by residues 9–11 and 35–36; these read DVH and HS. His43 is a binding site for a divalent metal cation. Residues 57–59, 62–66, 101–107, 133–136, Phe140, and Arg143 each bind 4-CDP-2-C-methyl-D-erythritol 2-phosphate; these read DIG, FPDTD, AQKPKMA, and TTTE.

Belongs to the IspF family. Homotrimer. The cofactor is a divalent metal cation.

The enzyme catalyses 4-CDP-2-C-methyl-D-erythritol 2-phosphate = 2-C-methyl-D-erythritol 2,4-cyclic diphosphate + CMP. The protein operates within isoprenoid biosynthesis; isopentenyl diphosphate biosynthesis via DXP pathway; isopentenyl diphosphate from 1-deoxy-D-xylulose 5-phosphate: step 4/6. Functionally, involved in the biosynthesis of isopentenyl diphosphate (IPP) and dimethylallyl diphosphate (DMAPP), two major building blocks of isoprenoid compounds. Catalyzes the conversion of 4-diphosphocytidyl-2-C-methyl-D-erythritol 2-phosphate (CDP-ME2P) to 2-C-methyl-D-erythritol 2,4-cyclodiphosphate (ME-CPP) with a corresponding release of cytidine 5-monophosphate (CMP). In Bacillus cereus (strain ATCC 10987 / NRS 248), this protein is 2-C-methyl-D-erythritol 2,4-cyclodiphosphate synthase.